The sequence spans 268 residues: MQKTNKFLKIGNKEFKSRLLVGTGKYSSLEVMQKSLINTKCEIVTVAVRRVQGLEHGHKGLMESIDWKRIWMLPNTAGCSNAEEAIRIARLGRELAKLAGQETNNFVKLEVIPDKKYLLPDPIGTLKAAEQLVKEGFTVLPYINSDPLIAKQLEEIGCATVMPLGSPIGSAQGIRNAANIAMIIAESRIPIIIDAGIGVPSEAAQALEMGADGVLINSAIALAENPILMAQAFSKATEAGRDGYLSGRLKENPLASPSSPLDGVISNN.

K108 (schiff-base intermediate with DXP) is an active-site residue. 1-deoxy-D-xylulose 5-phosphate is bound by residues G169, 195–196 (AG), and 217–218 (NS). Residues 248–268 (RLKENPLASPSSPLDGVISNN) form a disordered region. Over residues 255–268 (ASPSSPLDGVISNN) the composition is skewed to polar residues.

The protein belongs to the ThiG family. As to quaternary structure, homotetramer. Forms heterodimers with either ThiH or ThiS.

The protein localises to the cytoplasm. The enzyme catalyses [ThiS sulfur-carrier protein]-C-terminal-Gly-aminoethanethioate + 2-iminoacetate + 1-deoxy-D-xylulose 5-phosphate = [ThiS sulfur-carrier protein]-C-terminal Gly-Gly + 2-[(2R,5Z)-2-carboxy-4-methylthiazol-5(2H)-ylidene]ethyl phosphate + 2 H2O + H(+). It participates in cofactor biosynthesis; thiamine diphosphate biosynthesis. In terms of biological role, catalyzes the rearrangement of 1-deoxy-D-xylulose 5-phosphate (DXP) to produce the thiazole phosphate moiety of thiamine. Sulfur is provided by the thiocarboxylate moiety of the carrier protein ThiS. In vitro, sulfur can be provided by H(2)S. The sequence is that of Thiazole synthase from Prochlorococcus marinus (strain NATL2A).